Here is a 103-residue protein sequence, read N- to C-terminus: Pyrimidine/purine nucleoside phosphorylase (103 aa).

Belongs to the nucleoside phosphorylase PpnP family.

It catalyses the reaction a purine D-ribonucleoside + phosphate = a purine nucleobase + alpha-D-ribose 1-phosphate. The catalysed reaction is adenosine + phosphate = alpha-D-ribose 1-phosphate + adenine. It carries out the reaction cytidine + phosphate = cytosine + alpha-D-ribose 1-phosphate. The enzyme catalyses guanosine + phosphate = alpha-D-ribose 1-phosphate + guanine. It catalyses the reaction inosine + phosphate = alpha-D-ribose 1-phosphate + hypoxanthine. The catalysed reaction is thymidine + phosphate = 2-deoxy-alpha-D-ribose 1-phosphate + thymine. It carries out the reaction uridine + phosphate = alpha-D-ribose 1-phosphate + uracil. The enzyme catalyses xanthosine + phosphate = alpha-D-ribose 1-phosphate + xanthine. In terms of biological role, catalyzes the phosphorolysis of diverse nucleosides, yielding D-ribose 1-phosphate and the respective free bases. Can use uridine, adenosine, guanosine, cytidine, thymidine, inosine and xanthosine as substrates. Also catalyzes the reverse reactions. In Citrifermentans bemidjiense (strain ATCC BAA-1014 / DSM 16622 / JCM 12645 / Bem) (Geobacter bemidjiensis), this protein is Pyrimidine/purine nucleoside phosphorylase.